The following is a 135-amino-acid chain: Beta/delta-urticatoxin-Ui2a (135 aa).

The first 18 residues, 1–18 (MGAIVLVAIMALVASSSA), serve as a signal peptide directing secretion. Residues 19–72 (FSDDEQNMMNAEGEKGIRSYSAADDVSDMIESLFVNSGNRNLVLMMLSGRPQPN) constitute a propeptide that is removed on maturation. Disulfide bonds link Cys75–Cys92, Cys82–Cys97, Cys91–Cys105, Cys107–Cys121, Cys114–Cys126, and Cys120–Cys134.

This sequence belongs to the urticatoxin-2 family. In terms of tissue distribution, expressed in trichomes, that are stiff epidermal hairs located on the surface of petioles and leaves.

It is found in the secreted. Plant defense neurotoxin that causes pain and systemic symptoms in mammals via modulation of voltage-gated sodium channels (Nav). Potent modulator of human Nav1.5/SCN5A (EC(50)=55 nM), Nav1.6/SCN8A (EC(50)=0.86 nM), and Nav1.7/SCN9A (EC(50)=208 nM), where it shifts the activation threshold to more negative potentials and delays fast inactivation. Also shifts the voltage-dependence of steady-state fast inactivation of Nav1.6/SCN8A, but not that of Nav1.5/SCN5A or Nav1.7/SCN9A. On Nav1.7/SCN9A, principally acts by binding to extracellular loops of domain IV (Nav site 3). In vivo, intraplantar injection into mice causes numerous dose-dependent, immediate, and long-lasting spontaneous pain behaviors, while no swelling is observed in the injected paw. At the highest doses tested, systemic symptoms including hypokinesia and hypersalivation are observed. The protein is Beta/delta-urticatoxin-Ui2a of Urtica incisa (Scrub nettle).